Consider the following 101-residue polypeptide: Small ribosomal subunit protein bS6 (101 aa).

It belongs to the bacterial ribosomal protein bS6 family.

Functionally, binds together with bS18 to 16S ribosomal RNA. This chain is Small ribosomal subunit protein bS6, found in Nitratidesulfovibrio vulgaris (strain ATCC 29579 / DSM 644 / CCUG 34227 / NCIMB 8303 / VKM B-1760 / Hildenborough) (Desulfovibrio vulgaris).